The chain runs to 106 residues: uncharacterized protein (106 aa).

This is an uncharacterized protein from Invertebrate iridescent virus 3 (IIV-3).